A 432-amino-acid chain; its full sequence is 3-phosphoshikimate 1-carboxyvinyltransferase (432 aa).

3-phosphoshikimate-binding residues include Lys23, Ser24, and Arg28. Residue Lys23 coordinates phosphoenolpyruvate. Phosphoenolpyruvate-binding residues include Gly95 and Arg123. 4 residues coordinate 3-phosphoshikimate: Ser167, Gln169, Asp317, and Lys344. Gln169 contacts phosphoenolpyruvate. Catalysis depends on Asp317, which acts as the Proton acceptor. Positions 348 and 390 each coordinate phosphoenolpyruvate.

This sequence belongs to the EPSP synthase family. Monomer.

Its subcellular location is the cytoplasm. It carries out the reaction 3-phosphoshikimate + phosphoenolpyruvate = 5-O-(1-carboxyvinyl)-3-phosphoshikimate + phosphate. It functions in the pathway metabolic intermediate biosynthesis; chorismate biosynthesis; chorismate from D-erythrose 4-phosphate and phosphoenolpyruvate: step 6/7. In terms of biological role, catalyzes the transfer of the enolpyruvyl moiety of phosphoenolpyruvate (PEP) to the 5-hydroxyl of shikimate-3-phosphate (S3P) to produce enolpyruvyl shikimate-3-phosphate and inorganic phosphate. The chain is 3-phosphoshikimate 1-carboxyvinyltransferase from Staphylococcus aureus (strain COL).